We begin with the raw amino-acid sequence, 468 residues long: Replication factor C large subunit (468 aa).

Residue 50–57 (GPPGSGKT) participates in ATP binding. The interval 422–456 (EEKAVEEKVEEEEAEEEEEEERKEEEKPKAEKKKG) is disordered. The segment covering 429–444 (KVEEEEAEEEEEEERK) has biased composition (acidic residues).

It belongs to the activator 1 small subunits family. RfcL subfamily. In terms of assembly, heteromultimer composed of small subunits (RfcS) and large subunits (RfcL).

Functionally, part of the RFC clamp loader complex which loads the PCNA sliding clamp onto DNA. The protein is Replication factor C large subunit of Pyrococcus horikoshii (strain ATCC 700860 / DSM 12428 / JCM 9974 / NBRC 100139 / OT-3).